The following is a 347-amino-acid chain: Probable E3 ubiquitin-protein ligase DTX3 (347 aa).

The segment at 113-157 (EHPEMHRAGPPPLRAAPLLPPGARGLPPPPPPLPPPLPPRLREEA) is disordered. Residues 121–151 (GPPPLRAAPLLPPGARGLPPPPPPLPPPLPP) show a composition bias toward pro residues. The segment at 164 to 205 (CPICLGEIQNAKTLEKCRHSFCEGCITRALQVKKACPMCGRF) adopts an RING-type zinc-finger fold.

This sequence belongs to the Deltex family. In terms of assembly, homodimer. May form a heterodimers with other members of the Deltex family. Interacts with NOTCH1.

It is found in the cytoplasm. The enzyme catalyses S-ubiquitinyl-[E2 ubiquitin-conjugating enzyme]-L-cysteine + [acceptor protein]-L-lysine = [E2 ubiquitin-conjugating enzyme]-L-cysteine + N(6)-ubiquitinyl-[acceptor protein]-L-lysine.. It participates in protein modification; protein ubiquitination. Regulator of Notch signaling, a signaling pathway involved in cell-cell communications that regulates a broad spectrum of cell-fate determinations. Probably acts both as a positive and negative regulator of Notch, depending on the developmental and cell context. Functions as an ubiquitin ligase protein in vitro, suggesting that it may regulate the Notch pathway via some ubiquitin ligase activity. This Homo sapiens (Human) protein is Probable E3 ubiquitin-protein ligase DTX3 (DTX3).